The sequence spans 232 residues: 2-C-methyl-D-erythritol 4-phosphate cytidylyltransferase (232 aa).

Belongs to the IspD/TarI cytidylyltransferase family. IspD subfamily.

It carries out the reaction 2-C-methyl-D-erythritol 4-phosphate + CTP + H(+) = 4-CDP-2-C-methyl-D-erythritol + diphosphate. It participates in isoprenoid biosynthesis; isopentenyl diphosphate biosynthesis via DXP pathway; isopentenyl diphosphate from 1-deoxy-D-xylulose 5-phosphate: step 2/6. In terms of biological role, catalyzes the formation of 4-diphosphocytidyl-2-C-methyl-D-erythritol from CTP and 2-C-methyl-D-erythritol 4-phosphate (MEP). This is 2-C-methyl-D-erythritol 4-phosphate cytidylyltransferase from Nitrosospira multiformis (strain ATCC 25196 / NCIMB 11849 / C 71).